Here is a 92-residue protein sequence, read N- to C-terminus: uncharacterized protein (92 aa).

The segment at 25 to 53 (AGRGVRREARDTPCRGTAEGLATSQPEDG) is disordered.

This is an uncharacterized protein from Treponema pallidum (strain Nichols).